The chain runs to 250 residues: 26S proteasome non-ATPase regulatory subunit 8 (250 aa).

The PCI domain maps to 63–233; that stretch reads HDFETFDDYI…QEKPVNLDTV (171 aa).

It belongs to the proteasome subunit S14 family.

In terms of biological role, acts as a regulatory subunit of the 26S proteasome which is involved in the ATP-dependent degradation of ubiquitinated proteins. The chain is 26S proteasome non-ATPase regulatory subunit 8 from Caenorhabditis elegans.